The following is a 434-amino-acid chain: Methylenetetrahydrofolate--tRNA-(uracil-5-)-methyltransferase TrmFO (434 aa).

10-15 (GAGLAG) is an FAD binding site.

It belongs to the MnmG family. TrmFO subfamily. FAD is required as a cofactor.

The protein resides in the cytoplasm. The enzyme catalyses uridine(54) in tRNA + (6R)-5,10-methylene-5,6,7,8-tetrahydrofolate + NADH + H(+) = 5-methyluridine(54) in tRNA + (6S)-5,6,7,8-tetrahydrofolate + NAD(+). The catalysed reaction is uridine(54) in tRNA + (6R)-5,10-methylene-5,6,7,8-tetrahydrofolate + NADPH + H(+) = 5-methyluridine(54) in tRNA + (6S)-5,6,7,8-tetrahydrofolate + NADP(+). Its function is as follows. Catalyzes the folate-dependent formation of 5-methyl-uridine at position 54 (M-5-U54) in all tRNAs. The polypeptide is Methylenetetrahydrofolate--tRNA-(uracil-5-)-methyltransferase TrmFO (Bacillus anthracis (strain A0248)).